The chain runs to 248 residues: NADP-dependent 3-hydroxy acid dehydrogenase YdfG (248 aa).

NADP(+) is bound by residues 7–12 (GATAGF), 32–33 (RR), 54–55 (DV), and N81. S134 contacts substrate. NADP(+) contacts are provided by residues Y147, K151, and 177–185 (PGLVGGTEF). Y147 acts as the Proton acceptor in catalysis.

The protein belongs to the short-chain dehydrogenases/reductases (SDR) family. Homotetramer.

The catalysed reaction is 3-hydroxypropanoate + NADP(+) = 3-oxopropanoate + NADPH + H(+). It catalyses the reaction L-allo-threonine + NADP(+) = aminoacetone + CO2 + NADPH. NADP-dependent dehydrogenase with broad substrate specificity acting on 3-hydroxy acids. Catalyzes the NADP-dependent oxidation of L-allo-threonine to L-2-amino-3-keto-butyrate, which is spontaneously decarboxylated into aminoacetone. Also acts on D-threonine, L-serine, D-serine, D-3-hydroxyisobutyrate, L-3-hydroxyisobutyrate, D-glycerate and L-glycerate. Able to catalyze the reduction of the malonic semialdehyde to 3-hydroxypropionic acid. YdfG is apparently supplementing RutE, the presumed malonic semialdehyde reductase involved in pyrimidine degradation since both are able to detoxify malonic semialdehyde. The chain is NADP-dependent 3-hydroxy acid dehydrogenase YdfG from Salmonella typhi.